Reading from the N-terminus, the 115-residue chain is NADH-ubiquinone oxidoreductase chain 3 (115 aa).

3 helical membrane passes run 3 to 23 (LMLV…IAFW), 55 to 75 (FFLV…LLPL), and 87 to 107 (VLIM…YEWI).

The protein belongs to the complex I subunit 3 family. Core subunit of respiratory chain NADH dehydrogenase (Complex I) which is composed of 45 different subunits. Interacts with TMEM186. Interacts with TMEM242.

The protein resides in the mitochondrion inner membrane. It carries out the reaction a ubiquinone + NADH + 5 H(+)(in) = a ubiquinol + NAD(+) + 4 H(+)(out). Core subunit of the mitochondrial membrane respiratory chain NADH dehydrogenase (Complex I) which catalyzes electron transfer from NADH through the respiratory chain, using ubiquinone as an electron acceptor. Essential for the catalytic activity of complex I. The chain is NADH-ubiquinone oxidoreductase chain 3 from Oryctolagus cuniculus (Rabbit).